Here is a 343-residue protein sequence, read N- to C-terminus: Flavone 3'-O-methyltransferase OMT2 (343 aa).

A (E)-ferulate-binding site is contributed by Asn-107. Residues Gly-184, Asp-207, Asp-227, Met-228, Met-240, and Lys-241 each contribute to the S-adenosyl-L-homocysteine site. The active-site Proton acceptor is the His-245. Asp-246 serves as a coordination point for (E)-5-hydroxyferulate. Residues Glu-273 and Glu-305 contribute to the active site.

The protein belongs to the class I-like SAM-binding methyltransferase superfamily. Cation-independent O-methyltransferase family. COMT subfamily. As to quaternary structure, homodimer.

The catalysed reaction is (E)-5-hydroxyferulate + S-adenosyl-L-methionine = (E)-sinapate + S-adenosyl-L-homocysteine + H(+). It carries out the reaction luteolin + S-adenosyl-L-methionine = chrysoeriol + S-adenosyl-L-homocysteine + H(+). The enzyme catalyses quercetin + S-adenosyl-L-methionine = isorhamnetin + S-adenosyl-L-homocysteine + H(+). It catalyses the reaction (E)-caffeate + S-adenosyl-L-methionine = (E)-ferulate + S-adenosyl-L-homocysteine + H(+). The catalysed reaction is a 3'-hydroxyflavone + S-adenosyl-L-methionine = a 3'-methoxyflavone + S-adenosyl-L-homocysteine + H(+). It participates in flavonoid metabolism. In terms of biological role, catalyzes the 3'-O-methylation of the flavonoids luteolin and quercetin. Catalyzes the 3- of 5-O-methylation of the phenylpropanoids caffeate and 5-hydroxyferulate. Substrate preference is 5-hydroxyferulate &gt; luteolin &gt; quercetin &gt; caffeate. Apigenin, kempferol and 3,4-dimethylquercetin do not seem to be substrates for methylation. This chain is Flavone 3'-O-methyltransferase OMT2, found in Chrysosplenium americanum (American golden saxifrage).